A 729-amino-acid chain; its full sequence is Fatty acid oxidation complex subunit alpha (729 aa).

The tract at residues 1 to 189 is enoyl-CoA hydratase/isomerase; it reads MLYKGDTLYL…KIGLVDGVVK (189 aa). A substrate-binding site is contributed by D296. The segment at 311–729 is 3-hydroxyacyl-CoA dehydrogenase; it reads ETPKQAAVLG…ARPVGSLKTA (419 aa). NAD(+) contacts are provided by residues M324, D343, 400 to 402, K407, and S429; that span reads VVE. Residue H450 is the For 3-hydroxyacyl-CoA dehydrogenase activity of the active site. N453 is a binding site for NAD(+). Substrate is bound by residues N500 and Y660. Residues 708 to 729 form a disordered region; it reads RHNEPYYPPVEPARPVGSLKTA.

It in the N-terminal section; belongs to the enoyl-CoA hydratase/isomerase family. The protein in the C-terminal section; belongs to the 3-hydroxyacyl-CoA dehydrogenase family. Heterotetramer of two alpha chains (FadB) and two beta chains (FadA).

The enzyme catalyses a (3S)-3-hydroxyacyl-CoA + NAD(+) = a 3-oxoacyl-CoA + NADH + H(+). It catalyses the reaction a (3S)-3-hydroxyacyl-CoA = a (2E)-enoyl-CoA + H2O. It carries out the reaction a 4-saturated-(3S)-3-hydroxyacyl-CoA = a (3E)-enoyl-CoA + H2O. The catalysed reaction is (3S)-3-hydroxybutanoyl-CoA = (3R)-3-hydroxybutanoyl-CoA. The enzyme catalyses a (3Z)-enoyl-CoA = a 4-saturated (2E)-enoyl-CoA. It catalyses the reaction a (3E)-enoyl-CoA = a 4-saturated (2E)-enoyl-CoA. Its pathway is lipid metabolism; fatty acid beta-oxidation. Its function is as follows. Involved in the aerobic and anaerobic degradation of long-chain fatty acids via beta-oxidation cycle. Catalyzes the formation of 3-oxoacyl-CoA from enoyl-CoA via L-3-hydroxyacyl-CoA. It can also use D-3-hydroxyacyl-CoA and cis-3-enoyl-CoA as substrate. This Salmonella schwarzengrund (strain CVM19633) protein is Fatty acid oxidation complex subunit alpha.